The primary structure comprises 163 residues: 5-hydroxymethyl-dUMP N-hydrolase (163 aa).

Residue alanine 2 is modified to N-acetylalanine. Position 16 (glycine 16) interacts with 5-hydroxymethyl-dUMP. At serine 17 the chain carries Phosphoserine. 5-hydroxymethyl-dUMP is bound by residues isoleucine 18, arginine 19, glycine 20, serine 87, glycine 89, and glutamate 93. Serine 87 carries the post-translational modification Phosphoserine. Serine 112, serine 117, serine 127, and serine 158 each carry phosphoserine. Residue serine 117 coordinates 5-hydroxymethyl-dUMP.

As to quaternary structure, monomer and homodimer. As to expression, highly expressed in heart, kidney, liver and spleen. Weakly expressed in lung and skeletal muscle.

Its subcellular location is the cytoplasm. It localises to the nucleus. It carries out the reaction 5-hydroxymethyl-dUMP + H2O = 5-hydroxymethyluracil + 2-deoxy-D-ribose 5-phosphate. Its function is as follows. Part of a nucleotide salvage pathway that eliminates epigenetically modified 5-hydroxymethyl-dCMP (hmdCMP) in a two-step process entailing deamination to cytotoxic 5-hydroxymethyl-dUMP (hmdUMP), followed by its hydrolysis into 5-hydroxymethyluracil (hmU) and 2-deoxy-D-ribose 5-phosphate (deoxyribosephosphate). Catalyzes the second step in that pathway, the hydrolysis of the N-glycosidic bond in hmdUMP, degrading this cytotoxic nucleotide to avoid its genomic integration. The sequence is that of 5-hydroxymethyl-dUMP N-hydrolase from Rattus norvegicus (Rat).